Consider the following 412-residue polypeptide: Cathepsin D (412 aa).

Positions 1 to 20 are cleaved as a signal peptide; that stretch reads MQPSSLLPLALCLLAAPASA. The propeptide at 21-64 is activation peptide; it reads LVRIPLHKFTSIRRTMSEVGGSVEDLIAKGPVSKYSQAVPAVTE. An O-linked (GalNAc...) threonine glycan is attached at threonine 63. The region spanning 79–407 is the Peptidase A1 domain; that stretch reads YYGEIGIGTP…DRDNNRVGFA (329 aa). 2 disulfides stabilise this stretch: cysteine 91/cysteine 160 and cysteine 110/cysteine 117. Residue aspartate 97 is part of the active site. 2 N-linked (GlcNAc...) asparagine glycosylation sites follow: asparagine 134 and asparagine 263. Cysteine 286 and cysteine 290 are oxidised to a cystine. The active site involves aspartate 295. Cysteine 329 and cysteine 366 are joined by a disulfide.

The protein belongs to the peptidase A1 family. In terms of assembly, consists of a light chain and a heavy chain. Interacts with ADAM30; this leads to activation of CTSD. Interacts with GRN; stabilizes CTSD; increases its proteolytic activity. N- and O-glycosylated. In terms of processing, undergoes proteolytic cleavage and activation by ADAM30. Post-translationally, as well as the major heavy chain which starts at Leu-169, 2 minor forms starting at Gly-170 and Gly-171 have been identified. An additional form starting at Ala-168 has also been identified. Expressed in the aorta extracellular space (at protein level). Expressed in liver (at protein level).

The protein resides in the lysosome. The protein localises to the melanosome. It localises to the secreted. Its subcellular location is the extracellular space. It carries out the reaction Specificity similar to, but narrower than, that of pepsin A. Does not cleave the 4-Gln-|-His-5 bond in B chain of insulin.. Its function is as follows. Acid protease active in intracellular protein breakdown. Plays a role in APP processing following cleavage and activation by ADAM30 which leads to APP degradation. Involved in the pathogenesis of several diseases such as breast cancer and possibly Alzheimer disease. This Homo sapiens (Human) protein is Cathepsin D (CTSD).